Consider the following 151-residue polypeptide: uncharacterized protein (151 aa).

The segment at 48–151 is disordered; that stretch reads RPPGWQPPVN…SKFDHTRKKF (104 aa). Residues 55–77 are compositionally biased toward polar residues; sequence PVNTGPTSPVSINASNAAPSNLK. Composition is skewed to low complexity over residues 85-105 and 123-141; these read PRRL…RLPS and KSPS…SLLR.

This is an uncharacterized protein from Schizosaccharomyces pombe (strain 972 / ATCC 24843) (Fission yeast).